The sequence spans 310 residues: Ribose-phosphate pyrophosphokinase (310 aa).

Residues 34–36 (DGE) and 93–94 (RQ) each bind ATP. Mg(2+) is bound by residues H127 and D167. Residue K190 is part of the active site. D-ribose 5-phosphate-binding positions include R192, D216, and 220-224 (DSGGT).

Belongs to the ribose-phosphate pyrophosphokinase family. Class I subfamily. As to quaternary structure, homohexamer. The cofactor is Mg(2+).

The protein resides in the cytoplasm. The catalysed reaction is D-ribose 5-phosphate + ATP = 5-phospho-alpha-D-ribose 1-diphosphate + AMP + H(+). It functions in the pathway metabolic intermediate biosynthesis; 5-phospho-alpha-D-ribose 1-diphosphate biosynthesis; 5-phospho-alpha-D-ribose 1-diphosphate from D-ribose 5-phosphate (route I): step 1/1. Functionally, involved in the biosynthesis of the central metabolite phospho-alpha-D-ribosyl-1-pyrophosphate (PRPP) via the transfer of pyrophosphoryl group from ATP to 1-hydroxyl of ribose-5-phosphate (Rib-5-P). The sequence is that of Ribose-phosphate pyrophosphokinase from Maricaulis maris (strain MCS10) (Caulobacter maris).